Here is a 363-residue protein sequence, read N- to C-terminus: Phosphoserine aminotransferase (363 aa).

R42 contributes to the L-glutamate binding site. Pyridoxal 5'-phosphate is bound by residues 76 to 77, W101, T151, D170, and Q193; that span reads AS. K194 is subject to N6-(pyridoxal phosphate)lysine. 234–235 is a pyridoxal 5'-phosphate binding site; that stretch reads NT.

It belongs to the class-V pyridoxal-phosphate-dependent aminotransferase family. SerC subfamily. Homodimer. Requires pyridoxal 5'-phosphate as cofactor.

The protein localises to the cytoplasm. The catalysed reaction is O-phospho-L-serine + 2-oxoglutarate = 3-phosphooxypyruvate + L-glutamate. It catalyses the reaction 4-(phosphooxy)-L-threonine + 2-oxoglutarate = (R)-3-hydroxy-2-oxo-4-phosphooxybutanoate + L-glutamate. It participates in amino-acid biosynthesis; L-serine biosynthesis; L-serine from 3-phospho-D-glycerate: step 2/3. Catalyzes the reversible conversion of 3-phosphohydroxypyruvate to phosphoserine and of 3-hydroxy-2-oxo-4-phosphonooxybutanoate to phosphohydroxythreonine. The chain is Phosphoserine aminotransferase from Listeria monocytogenes serovar 1/2a (strain ATCC BAA-679 / EGD-e).